The chain runs to 469 residues: 1-aminocyclopropane-1-carboxylate synthase 8 (469 aa).

The substrate site is built by E47 and Y85. N6-(pyridoxal phosphate)lysine is present on K272.

The protein belongs to the class-I pyridoxal-phosphate-dependent aminotransferase family. As to quaternary structure, homodimer and heterodimer. In vivo, the relevance of heterodimerization with other ACS enzymes is however unsure. Interacts with GRF3. Requires pyridoxal 5'-phosphate as cofactor. May be processed at its C-terminus. In terms of tissue distribution, expressed in roots. Expressed at low level in flowers and siliques.

It carries out the reaction S-adenosyl-L-methionine = 1-aminocyclopropane-1-carboxylate + S-methyl-5'-thioadenosine + H(+). The protein operates within alkene biosynthesis; ethylene biosynthesis via S-adenosyl-L-methionine; ethylene from S-adenosyl-L-methionine: step 1/2. 1-aminocyclopropane-1-carboxylate synthase (ACS) enzymes catalyze the conversion of S-adenosyl-L-methionine (SAM) into 1-aminocyclopropane-1-carboxylate (ACC), a direct precursor of ethylene. This chain is 1-aminocyclopropane-1-carboxylate synthase 8 (ACS8), found in Arabidopsis thaliana (Mouse-ear cress).